A 402-amino-acid polypeptide reads, in one-letter code: Acetate kinase (402 aa).

Residue N7 coordinates Mg(2+). Residue K14 coordinates ATP. R95 contributes to the substrate binding site. Residue D152 is the Proton donor/acceptor of the active site. ATP-binding positions include 212 to 216, 286 to 288, and 334 to 338; these read HLGNG, DMR, and GIGEN. E388 serves as a coordination point for Mg(2+).

It belongs to the acetokinase family. As to quaternary structure, homodimer. Mg(2+) serves as cofactor. It depends on Mn(2+) as a cofactor.

It is found in the cytoplasm. It catalyses the reaction acetate + ATP = acetyl phosphate + ADP. It functions in the pathway metabolic intermediate biosynthesis; acetyl-CoA biosynthesis; acetyl-CoA from acetate: step 1/2. Catalyzes the formation of acetyl phosphate from acetate and ATP. Can also catalyze the reverse reaction. The sequence is that of Acetate kinase from Nitratidesulfovibrio vulgaris (strain ATCC 29579 / DSM 644 / CCUG 34227 / NCIMB 8303 / VKM B-1760 / Hildenborough) (Desulfovibrio vulgaris).